A 628-amino-acid chain; its full sequence is ATP-dependent zinc metalloprotease FtsH (628 aa).

The Stromal portion of the chain corresponds to 1–7 (MKLSWKT). Residues 8–28 (LLLWSLPIFVIGFFFWQGFLG) form a helical membrane-spanning segment. Topologically, residues 29 to 118 (PTTTDVGSNI…AHPPKSTSAV (90 aa)) are lumenal. The chain crosses the membrane as a helical span at residues 119 to 139 (WGLLGNLLFPLLLVGGLAFLF). The Stromal segment spans residues 140–628 (RRSNNASGGP…PEKNYYISQF (489 aa)). 213-220 (GPPGTGKT) is an ATP binding site. His434 is a binding site for Zn(2+). Glu435 is an active-site residue. Zn(2+) contacts are provided by His438 and Asp512.

This sequence in the central section; belongs to the AAA ATPase family. It in the C-terminal section; belongs to the peptidase M41 family. In terms of assembly, homohexamer. It depends on Zn(2+) as a cofactor.

It localises to the plastid. It is found in the chloroplast thylakoid membrane. Functionally, acts as a processive, ATP-dependent zinc metallopeptidase. The sequence is that of ATP-dependent zinc metalloprotease FtsH from Pyropia yezoensis (Susabi-nori).